The chain runs to 605 residues: MALPPTEVHHIRNFCIIAHIDHGKSTLADRLLEITNTLDRSQMSSAQVLDDMDLERERGITIKSHAVQMKYRASDGLDYTLNLIDTPGHVDFSYEVSRSLAACEGALLVVDATQGVEAQTIANLYLALDAGLEIIPVINKIDLPSSDVEGVARQIIDLIGIKRDEILQVSAKAGIGVYELIEAIVKRVPAPSDNKHLPLRALIFDSVFDIYRGTVAYLRIVDGVLKKGDKVRFFANNKVFLADEIGTMSLKRQPSAVLEAGDVGYLICSIKDVKDAKVGDTVTLSDSPALEALAGYKEVKPMVFSGLYPVNSNEFEDLRESLEKLALNDASLIYTPETSVALGFGFRCGFLGLLHMEIIQERLEREYGVNIITTVPNVEYRVILTNGDVVIVDNPSKMPDTSRIGDVEEPYVSMQIITLSDYIGNIMKLGMERRGEYKNTDYLDSTRVNMHFEFPLAEIVFDFHDKLKSISKGYASMDYEYIDYRQSDLVKLDVLLNAEPVDALSIIVHRSKAYEWGRKLCTKLKGIIPKQMYEVAIQAAIGSRVISRETISAMRKNVLAKCYGGDISRKRKLLEKQKEGKKRMKQVGRVEIPQEAFLAILTIDE.

The tr-type G domain occupies 9-192; sequence HHIRNFCIIA…AIVKRVPAPS (184 aa). Residues 21–26 and 139–142 contribute to the GTP site; these read DHGKST and NKID.

Belongs to the TRAFAC class translation factor GTPase superfamily. Classic translation factor GTPase family. LepA subfamily.

It localises to the cell inner membrane. It catalyses the reaction GTP + H2O = GDP + phosphate + H(+). Functionally, required for accurate and efficient protein synthesis under certain stress conditions. May act as a fidelity factor of the translation reaction, by catalyzing a one-codon backward translocation of tRNAs on improperly translocated ribosomes. Back-translocation proceeds from a post-translocation (POST) complex to a pre-translocation (PRE) complex, thus giving elongation factor G a second chance to translocate the tRNAs correctly. Binds to ribosomes in a GTP-dependent manner. The protein is Elongation factor 4 of Chlorobium phaeobacteroides (strain DSM 266 / SMG 266 / 2430).